Consider the following 178-residue polypeptide: Gamma-crystallin S (178 aa).

Ser2 carries the N-acetylserine modification. The tract at residues 2-5 is N-terminal arm; the sequence is SKTG. 2 Beta/gamma crystallin 'Greek key' domains span residues 6 to 44 and 45 to 87; these read AKIS…RVEG and GTWA…RAVH. Positions 88–93 are connecting peptide; that stretch reads LSSGGQ. Beta/gamma crystallin 'Greek key' domains are found at residues 94–134 and 135–177; these read YKIQ…KVLE and GTWI…RRIV.

The protein belongs to the beta/gamma-crystallin family. As to quaternary structure, monomer.

In terms of biological role, crystallins are the dominant structural components of the vertebrate eye lens. The polypeptide is Gamma-crystallin S (Crygs) (Rattus norvegicus (Rat)).